Here is a 445-residue protein sequence, read N- to C-terminus: N-succinylarginine dihydrolase (445 aa).

Residues 19–28 (AGLSYGNVAS), N110, and 137–138 (HR) each bind substrate. E174 is a catalytic residue. Substrate is bound at residue R214. The active site involves H250. 2 residues coordinate substrate: D252 and N363. Residue C369 is the Nucleophile of the active site.

Belongs to the succinylarginine dihydrolase family. In terms of assembly, homodimer.

The catalysed reaction is N(2)-succinyl-L-arginine + 2 H2O + 2 H(+) = N(2)-succinyl-L-ornithine + 2 NH4(+) + CO2. It functions in the pathway amino-acid degradation; L-arginine degradation via AST pathway; L-glutamate and succinate from L-arginine: step 2/5. Catalyzes the hydrolysis of N(2)-succinylarginine into N(2)-succinylornithine, ammonia and CO(2). The sequence is that of N-succinylarginine dihydrolase from Aeromonas hydrophila subsp. hydrophila (strain ATCC 7966 / DSM 30187 / BCRC 13018 / CCUG 14551 / JCM 1027 / KCTC 2358 / NCIMB 9240 / NCTC 8049).